Reading from the N-terminus, the 909-residue chain is GTPase activating protein homolog 4 (909 aa).

The F-BAR domain occupies 1 to 257 (MASLIGSAKL…PTPDFQFESC (257 aa)). The Rho-GAP domain maps to 322-513 (IPIEEIMFKQ…LIIEGYLKLS (192 aa)). The tract at residues 529–909 (IPSFSNNNNN…QRVPPPPSQS (381 aa)) is disordered. Composition is skewed to low complexity over residues 533-562 (SNNN…ITTN) and 571-602 (SSTT…TPQQ). Positions 609–625 (SYQPPQPPPTMAPPPLF) are enriched in pro residues. Residues 651-674 (QYTQSSSNLPPIQLGVTNSPSKPQ) show a composition bias toward polar residues. A coiled-coil region spans residues 672–809 (KPQLSDKQKE…QQLQQQSNGS (138 aa)). The span at 675-716 (LSDKQKEKEKEKEKEKEKEKEREKEKEKEKEKEKEKEKEKEK) shows a compositional bias: basic and acidic residues. Residues 723–741 (SSSTSPNSSSLSISNFLSS) show a composition bias toward low complexity. Residues 742 to 765 (NKDKDKEKDKEKEKEKEKEKDKEI) are compositionally biased toward basic and acidic residues. Over residues 767-785 (ATNSTPEKPVSNRMSLIFS) the composition is skewed to polar residues. Composition is skewed to low complexity over residues 786–828 (QQLQ…MSPS) and 843–892 (SGTS…ELKS).

The protein resides in the cytoplasm. It localises to the contractile vacuole. Its function is as follows. Rho GTPase-activating protein involved in the signal transduction pathway. In Dictyostelium discoideum (Social amoeba), this protein is GTPase activating protein homolog 4 (mgp4).